A 121-amino-acid chain; its full sequence is Large ribosomal subunit protein mL52 (121 aa).

The N-terminal 22 residues, 1–22, are a transit peptide targeting the mitochondrion; it reads MAALGTWLSSVRRLHCSVVARA. Basic and acidic residues predominate over residues 98–109; sequence QEERKKEHDLKP. Residues 98 to 121 form a disordered region; the sequence is QEERKKEHDLKPKGTLLRSPLPNQ.

Belongs to the mitochondrion-specific ribosomal protein mL52 family. As to quaternary structure, component of the mitochondrial ribosome large subunit (39S) which comprises a 16S rRNA and about 50 distinct proteins.

It is found in the mitochondrion. The protein is Large ribosomal subunit protein mL52 (Mrpl52) of Mus musculus (Mouse).